The following is a 452-amino-acid chain: MILSKDIRLLPGSKVEAVIRVSKNIIQEKYNSLLQDYSSRLKIQGFRIGKVPISIIEKKYSEGLRATVLEEVINNSLKEFFKEEPKRPLSYASPTIKEENLRLNLDKDFEFTFVYETYPEFKVPNIDDIDIKVEVPEVFIDDSDIDNEIKSLQIENSIIIEDEEGVVKKDSIVKVDFVELDDLLNEIVSTKRQDFVFTVGKSETYYDFDRDVIGMRINEERVIEKSYITDYKFEELAGSLKKLKIKIKSIKKRDLPLIDDEFAKDISERYNTLDDLKNFIRSKILSLVEEKKEALKLNKFFSTISEKLEIDIPRSMIEAEIEIAFKDAKRQNKMSLEEFKSMFYSSGYNGSDSLKDEILSNLKSKLIIQKMVDLDPIKVTENDLKDEMVRQSENSGVSYEEIKKFYEDQNLIFYLKDDIKRKIVEKKILASLKEVKGKQVSFKDFVNYKICE.

Residues 170 to 256 (DSIVKVDFVE…IKSIKKRDLP (87 aa)) form the PPIase FKBP-type domain.

It belongs to the FKBP-type PPIase family. Tig subfamily.

Its subcellular location is the cytoplasm. It carries out the reaction [protein]-peptidylproline (omega=180) = [protein]-peptidylproline (omega=0). In terms of biological role, involved in protein export. Acts as a chaperone by maintaining the newly synthesized protein in an open conformation. Functions as a peptidyl-prolyl cis-trans isomerase. The protein is Trigger factor of Borreliella afzelii (strain PKo) (Borrelia afzelii).